The sequence spans 264 residues: 3-methyl-2-oxobutanoate hydroxymethyltransferase (264 aa).

Positions 45 and 84 each coordinate Mg(2+). 3-methyl-2-oxobutanoate is bound by residues 45–46, aspartate 84, and lysine 113; that span reads DS. Residue glutamate 115 participates in Mg(2+) binding. The Proton acceptor role is filled by glutamate 182.

It belongs to the PanB family. In terms of assembly, homodecamer; pentamer of dimers. The cofactor is Mg(2+).

The protein localises to the cytoplasm. The catalysed reaction is 3-methyl-2-oxobutanoate + (6R)-5,10-methylene-5,6,7,8-tetrahydrofolate + H2O = 2-dehydropantoate + (6S)-5,6,7,8-tetrahydrofolate. It functions in the pathway cofactor biosynthesis; (R)-pantothenate biosynthesis; (R)-pantoate from 3-methyl-2-oxobutanoate: step 1/2. Catalyzes the reversible reaction in which hydroxymethyl group from 5,10-methylenetetrahydrofolate is transferred onto alpha-ketoisovalerate to form ketopantoate. The polypeptide is 3-methyl-2-oxobutanoate hydroxymethyltransferase (Nitrosococcus oceani (strain ATCC 19707 / BCRC 17464 / JCM 30415 / NCIMB 11848 / C-107)).